The following is a 1769-amino-acid chain: U3 small nucleolar RNA-associated protein 10 (1769 aa).

Serine 2 is subject to N-acetylserine. The HEAT repeat unit spans residues 1729 to 1767; that stretch reads LVPVIAELLEDDDEEIEREVRTGLVKVVENVLGEPFDRY.

It belongs to the HEATR1/UTP10 family. In terms of assembly, interacts with snoRNA U3. Interacts with MPP10. Component of the ribosomal small subunit (SSU) processome composed of at least 40 protein subunits and snoRNA U3. In the absence of snoRNA3, forms a complex with other t-UTPs. This complex can associate with pre-18S ribosomal RNAs.

The protein localises to the nucleus. It is found in the nucleolus. The protein resides in the mitochondrion. Involved in nucleolar processing of pre-18S ribosomal RNA. Required for optimal pre-ribosomal RNA transcription by RNA polymerase I together with a subset of U3 proteins required for transcription (t-UTPs). Involved in ribosome biosynthesis. The chain is U3 small nucleolar RNA-associated protein 10 (UTP10) from Saccharomyces cerevisiae (strain ATCC 204508 / S288c) (Baker's yeast).